We begin with the raw amino-acid sequence, 227 residues long: PKHD-type hydroxylase Patl_2273 (227 aa).

The region spanning K78–S178 is the Fe2OG dioxygenase domain. Residues H96, D98, and H159 each contribute to the Fe cation site. R169 provides a ligand contact to 2-oxoglutarate.

Fe(2+) serves as cofactor. It depends on L-ascorbate as a cofactor.

This Pseudoalteromonas atlantica (strain T6c / ATCC BAA-1087) protein is PKHD-type hydroxylase Patl_2273.